Here is a 309-residue protein sequence, read N- to C-terminus: L-aminoadipate-semialdehyde dehydrogenase-phosphopantetheinyl transferase (309 aa).

CoA-binding positions include arginine 47, 86-91, and 108-111; these read RTAKGK and NISH. Mg(2+) contacts are provided by aspartate 129 and glutamate 181. 181-185 provides a ligand contact to CoA; that stretch reads ESFIK. A Phosphoserine modification is found at serine 258.

Belongs to the P-Pant transferase superfamily. AcpS family. As to quaternary structure, monomer. Mg(2+) serves as cofactor.

It is found in the cytoplasm. It localises to the cytosol. The catalysed reaction is apo-[ACP] + CoA = holo-[ACP] + adenosine 3',5'-bisphosphate + H(+). The enzyme catalyses apo-[ACP] + acetyl-CoA = acetyl-[ACP] + adenosine 3',5'-bisphosphate + H(+). Functionally, catalyzes the post-translational modification of target proteins by phosphopantetheine. Can transfer the 4'-phosphopantetheine moiety from coenzyme A, regardless of whether the CoA is presented in the free thiol form or as an acetyl thioester, to a serine residue of a broad range of acceptors including the acyl carrier domain of FASN. This is L-aminoadipate-semialdehyde dehydrogenase-phosphopantetheinyl transferase (AASDHPPT) from Pongo abelii (Sumatran orangutan).